The primary structure comprises 746 residues: MTCTSAFIKVVRFIQVVIDTREIRSLCTIRMQVESLQNLQAKIRNDERNHSLTKKYLTDDIVKKYQATKTSLGGTLAQCVNTNAYNPGALLPRSCDLNAYETFRDFFDAVIADYHKVPDGKIQHPKSNFGDLKSLSFTDLNTYGNLVVSTRVRLGRTVEGFGFGPTLTKETRIELENKISTALHNLSGEYEGTYYPLTGMSEEDRIKLVNDHFLFRNDDNVLRDAGGYIDWPTGRGIFINKQKNFLVWINEEDHIRVISMQKGGDLIAVYKRLADAIQELSKSLKFAFNDRLGFITFCPSNLGTTLRASVHAKIPMLASLPNFKEICEKHGIQPRGTHGEHTESVGGIYDLSNKRRLGLTELDAVTEMHSGVRALLELEVMLQEYNKGAPEGVMPVEPLTYLAKLLEGASIEKCYTRKYLTPEIIKKYDGKRTTHGATLAHMIRNGAYNNRSICPRTGEAECYSTFIDYLDPLICDYHGVKDSAFKHPAPTFGDLSKLPFGDLDPTGKFIVSTRVRVGRSVEDFLFPTIMSKTDRIKLEQVISGALKGLTGEHAGTYYPLTDMKEEDRKQLVEDHFLFKNDDPVLRDAGGYRDWPVGRGIFHNNSKTFLVWVCEEDHMRIISMQQGGNLAAVYKRLIEGINAIGKSMKFAHSDKYGYITCCPSNLGTSMRASVLLKIPKLSSQPKKLDEICAKYMLQARGLYGEHTESPDGTYDISNKRRLGLTELQAAHEMAEGVAKMIEIEKGL.

Approximate repeat units lie at residues 31 to 393 (MQVE…PEGV) and 394 to 705 (MPVE…YGEH). Residues 35-116 (SLQNLQAKIR…FDAVIADYHK (82 aa)) enclose the Phosphagen kinase N-terminal 1 domain. Positions 146–382 (LVVSTRVRLG…RALLELEVML (237 aa)) constitute a Phosphagen kinase C-terminal 1 domain. ATP-binding positions include 149 to 153 (STRVR), H212, and R256. C298 is an active-site residue. ATP is bound by residues 307–311 (RASVH) and 335–340 (RGTHGE). One can recognise a Phosphagen kinase N-terminal 2 domain in the interval 398–479 (PLTYLAKLLE…LDPLICDYHG (82 aa)). The 238-residue stretch at 509-746 (FIVSTRVRVG…AKMIEIEKGL (238 aa)) folds into the Phosphagen kinase C-terminal 2 domain. Residues 512-516 (STRVR), H575, and R619 each bind ATP. C661 is an active-site residue. ATP-binding positions include 670–674 (RASVL) and 699–704 (RGLYGE).

The protein belongs to the ATP:guanido phosphotransferase family. The cofactor is Mg(2+).

The catalysed reaction is taurocyamine + ATP = N-phosphotaurocyamine + ADP + H(+). Functionally, this family of enzymes reversibly catalyzes the transfer of phosphate between ATP and various phosphogens (e.g. creatine phosphate). The protein is Taurocyamine kinase of Schistosoma mansoni (Blood fluke).